We begin with the raw amino-acid sequence, 225 residues long: Histone H1 (225 aa).

Residues 1–20 (MGPKATSGTRGRGKKVGTKT) form a disordered region. Residues 23 to 94 (PLPKYKDLIV…GPAGSIKLLK (72 aa)) form the H15 domain. The interval 95–147 (KAAQPKPEEAKRAAKPAKRVVKAAKPAKAKPAKAAKAAKPAKPVKAAKAASAV) is disordered. A compositionally biased stretch (basic residues) spans 107–127 (AAKPAKRVVKAAKPAKAKPAK). Residues 128–147 (AAKAAKPAKPVKAAKAASAV) are compositionally biased toward low complexity.

It belongs to the histone H1/H5 family.

The protein resides in the nucleus. It localises to the chromosome. Its function is as follows. Could act as an H1-type linker histone. The sequence is that of Histone H1 (HHOA) from Eremothecium gossypii (strain ATCC 10895 / CBS 109.51 / FGSC 9923 / NRRL Y-1056) (Yeast).